We begin with the raw amino-acid sequence, 207 residues long: 3-demethoxyubiquinol 3-hydroxylase (207 aa).

Basic and acidic residues predominate over residues E22–P32. The interval E22–E41 is disordered. Fe cation is bound by residues E56, E86, H89, E138, E170, and H173.

The protein belongs to the COQ7 family. Fe cation is required as a cofactor.

The protein localises to the cell membrane. The catalysed reaction is a 5-methoxy-2-methyl-3-(all-trans-polyprenyl)benzene-1,4-diol + AH2 + O2 = a 3-demethylubiquinol + A + H2O. Its pathway is cofactor biosynthesis; ubiquinone biosynthesis. Catalyzes the hydroxylation of 2-nonaprenyl-3-methyl-6-methoxy-1,4-benzoquinol during ubiquinone biosynthesis. The polypeptide is 3-demethoxyubiquinol 3-hydroxylase (Cupriavidus metallidurans (strain ATCC 43123 / DSM 2839 / NBRC 102507 / CH34) (Ralstonia metallidurans)).